Reading from the N-terminus, the 507-residue chain is Probable lipid II flippase MurJ (507 aa).

13 consecutive transmembrane segments (helical) span residues 3-23, 54-74, 92-112, 132-152, 156-176, 185-205, 268-288, 310-330, 351-371, 379-399, 405-425, 438-458, and 472-492; these read LFRS…FGLV, IFAE…KMLI, LTLI…ILCI, ITIP…ILNS, FAAF…FTLI, ISIS…MFIC, IYQF…LPEM, IGLL…HPIT, ISAF…TPIF, TPLK…LLLM, IGIA…LYSY, IKLF…IIAL, and LLIK…IFFG.

This sequence belongs to the MurJ/MviN family.

The protein resides in the cell inner membrane. It functions in the pathway cell wall biogenesis; peptidoglycan biosynthesis. In terms of biological role, involved in peptidoglycan biosynthesis. Transports lipid-linked peptidoglycan precursors from the inner to the outer leaflet of the cytoplasmic membrane. This chain is Probable lipid II flippase MurJ, found in Rickettsia prowazekii (strain Madrid E).